The sequence spans 429 residues: Enolase (429 aa).

Residue Q162 participates in (2R)-2-phosphoglycerate binding. E204 serves as the catalytic Proton donor. Residues D241, E286, and D313 each coordinate Mg(2+). Residues K338, R367, S368, and K389 each coordinate (2R)-2-phosphoglycerate. The Proton acceptor role is filled by K338.

This sequence belongs to the enolase family. Requires Mg(2+) as cofactor.

It is found in the cytoplasm. The protein localises to the secreted. The protein resides in the cell surface. The enzyme catalyses (2R)-2-phosphoglycerate = phosphoenolpyruvate + H2O. It participates in carbohydrate degradation; glycolysis; pyruvate from D-glyceraldehyde 3-phosphate: step 4/5. Catalyzes the reversible conversion of 2-phosphoglycerate (2-PG) into phosphoenolpyruvate (PEP). It is essential for the degradation of carbohydrates via glycolysis. In Shouchella clausii (strain KSM-K16) (Alkalihalobacillus clausii), this protein is Enolase.